A 508-amino-acid polypeptide reads, in one-letter code: Hydroxymethylglutaryl-CoA synthase, mitochondrial (508 aa).

Residues 1–37 constitute a mitochondrion transit peptide; it reads MQRLLAPARRVLQVKRVMQESSLSPAHLLPAAQQRFS. Lysine 52 is modified (N6-succinyllysine). 2 residues coordinate (3S)-3-hydroxy-3-methylglutaryl-CoA: glutamate 80 and alanine 81. N6-acetyllysine; alternate is present on residues lysine 83 and lysine 118. 2 positions are modified to N6-succinyllysine; alternate: lysine 83 and lysine 118. The active-site Proton donor/acceptor is the glutamate 132. Residues cysteine 166, asparagine 204, and threonine 208 each contribute to the (3S)-3-hydroxy-3-methylglutaryl-CoA site. Cysteine 166 functions as the Acyl-thioester intermediate in the catalytic mechanism. Lysine 221 bears the N6-succinyllysine mark. Lysine 243 bears the N6-acetyllysine mark. N6-acetyllysine; alternate is present on lysine 256. Residue lysine 256 is modified to N6-succinyllysine; alternate. Residues serine 258 and histidine 301 each coordinate (3S)-3-hydroxy-3-methylglutaryl-CoA. Residue histidine 301 is the Proton donor/acceptor of the active site. N6-acetyllysine is present on lysine 306. Lysine 310 is a binding site for (3S)-3-hydroxy-3-methylglutaryl-CoA. N6-acetyllysine; alternate is present on residues lysine 310 and lysine 327. 2 positions are modified to N6-succinyllysine; alternate: lysine 310 and lysine 327. Lysine 333 carries the N6-succinyllysine modification. Residues lysine 342, lysine 350, lysine 354, and lysine 358 each carry the N6-acetyllysine; alternate modification. N6-succinyllysine; alternate is present on residues lysine 342, lysine 350, lysine 354, and lysine 358. (3S)-3-hydroxy-3-methylglutaryl-CoA is bound by residues asparagine 380 and serine 414. Lysine 427 carries the post-translational modification N6-acetyllysine. At serine 433 the chain carries Phosphoserine. Lysine 437 is subject to N6-acetyllysine. Serine 440 carries the post-translational modification Phosphoserine. Position 447 is an N6-acetyllysine; alternate (lysine 447). Residue lysine 447 is modified to N6-succinyllysine; alternate. Serine 456 bears the Phosphoserine mark. Residue lysine 473 is modified to N6-acetyllysine; alternate. Lysine 473 is modified (N6-succinyllysine; alternate). At serine 477 the chain carries Phosphoserine.

Belongs to the thiolase-like superfamily. HMG-CoA synthase family. Homodimer. Succinylated. Desuccinylated by SIRT5. Succinylation, at least at Lys-83 and Lys-310, inhibits the enzymatic activity. In terms of tissue distribution, liver and kidney.

Its subcellular location is the mitochondrion. It catalyses the reaction acetoacetyl-CoA + acetyl-CoA + H2O = (3S)-3-hydroxy-3-methylglutaryl-CoA + CoA + H(+). Its pathway is metabolic intermediate biosynthesis; (R)-mevalonate biosynthesis; (R)-mevalonate from acetyl-CoA: step 2/3. Functionally, catalyzes the first irreversible step in ketogenesis, condensing acetyl-CoA to acetoacetyl-CoA to form HMG-CoA, which is converted by HMG-CoA reductase (HMGCR) into mevalonate. The polypeptide is Hydroxymethylglutaryl-CoA synthase, mitochondrial (Hmgcs2) (Rattus norvegicus (Rat)).